Consider the following 330-residue polypeptide: Uroporphyrinogen decarboxylase (330 aa).

Substrate-binding positions include 10–14 (RQAGR), phenylalanine 29, serine 59, aspartate 60, tyrosine 137, serine 192, and histidine 307.

Belongs to the uroporphyrinogen decarboxylase family. Homodimer.

It is found in the plastid. The protein localises to the chloroplast. It catalyses the reaction uroporphyrinogen III + 4 H(+) = coproporphyrinogen III + 4 CO2. It participates in porphyrin-containing compound metabolism; protoporphyrin-IX biosynthesis; coproporphyrinogen-III from 5-aminolevulinate: step 4/4. Its function is as follows. Catalyzes the decarboxylation of four acetate groups of uroporphyrinogen-III to yield coproporphyrinogen-III. The protein is Uroporphyrinogen decarboxylase (DCUP) of Hordeum vulgare (Barley).